Reading from the N-terminus, the 299-residue chain is UDP-N-acetylenolpyruvoylglucosamine reductase (299 aa).

The FAD-binding PCMH-type domain occupies 28–193; the sequence is KVGGPADILA…LSAKFELQAG (166 aa). The active site involves arginine 172. Serine 222 acts as the Proton donor in catalysis. Residue glutamate 292 is part of the active site.

FAD is required as a cofactor.

Its subcellular location is the cytoplasm. It catalyses the reaction UDP-N-acetyl-alpha-D-muramate + NADP(+) = UDP-N-acetyl-3-O-(1-carboxyvinyl)-alpha-D-glucosamine + NADPH + H(+). It participates in cell wall biogenesis; peptidoglycan biosynthesis. Cell wall formation. This chain is UDP-N-acetylenolpyruvoylglucosamine reductase, found in Lactococcus lactis subsp. cremoris (strain MG1363).